Reading from the N-terminus, the 347-residue chain is Phenylalanine--tRNA ligase alpha subunit (347 aa).

Residue Glu-265 participates in Mg(2+) binding.

It belongs to the class-II aminoacyl-tRNA synthetase family. Phe-tRNA synthetase alpha subunit type 1 subfamily. Tetramer of two alpha and two beta subunits. The cofactor is Mg(2+).

Its subcellular location is the cytoplasm. It carries out the reaction tRNA(Phe) + L-phenylalanine + ATP = L-phenylalanyl-tRNA(Phe) + AMP + diphosphate + H(+). This Mycolicibacterium vanbaalenii (strain DSM 7251 / JCM 13017 / BCRC 16820 / KCTC 9966 / NRRL B-24157 / PYR-1) (Mycobacterium vanbaalenii) protein is Phenylalanine--tRNA ligase alpha subunit.